We begin with the raw amino-acid sequence, 301 residues long: NAD kinase (301 aa).

Aspartate 84 acts as the Proton acceptor in catalysis. NAD(+)-binding positions include 84–85 (DG), arginine 89, 158–159 (NE), lysine 169, asparagine 188, 199–204 (TAYSFS), and glutamine 258.

Belongs to the NAD kinase family. A divalent metal cation is required as a cofactor.

Its subcellular location is the cytoplasm. It carries out the reaction NAD(+) + ATP = ADP + NADP(+) + H(+). In terms of biological role, involved in the regulation of the intracellular balance of NAD and NADP, and is a key enzyme in the biosynthesis of NADP. Catalyzes specifically the phosphorylation on 2'-hydroxyl of the adenosine moiety of NAD to yield NADP. In Tropheryma whipplei (strain Twist) (Whipple's bacillus), this protein is NAD kinase.